The sequence spans 190 residues: MAQNGSEAGPLVAGVAGRYASALFELARDERQVDAVAESLNQFDGLLKESADLRRLVRSPVFSAEEQEAAIGAVLDKAGIGGLAGNFIRLAASNRRLFALPDMIDAFRALVQDSKGIVRAQVRVAERPSDAVIEEIKASLRDIAKADVDVDLVVDPSLIGGLVVKMGSRMVDASLKTKLNGIRLAMRAAR.

It belongs to the ATPase delta chain family. In terms of assembly, F-type ATPases have 2 components, F(1) - the catalytic core - and F(0) - the membrane proton channel. F(1) has five subunits: alpha(3), beta(3), gamma(1), delta(1), epsilon(1). F(0) has three main subunits: a(1), b(2) and c(10-14). The alpha and beta chains form an alternating ring which encloses part of the gamma chain. F(1) is attached to F(0) by a central stalk formed by the gamma and epsilon chains, while a peripheral stalk is formed by the delta and b chains.

It is found in the cell inner membrane. In terms of biological role, f(1)F(0) ATP synthase produces ATP from ADP in the presence of a proton or sodium gradient. F-type ATPases consist of two structural domains, F(1) containing the extramembraneous catalytic core and F(0) containing the membrane proton channel, linked together by a central stalk and a peripheral stalk. During catalysis, ATP synthesis in the catalytic domain of F(1) is coupled via a rotary mechanism of the central stalk subunits to proton translocation. Functionally, this protein is part of the stalk that links CF(0) to CF(1). It either transmits conformational changes from CF(0) to CF(1) or is implicated in proton conduction. The sequence is that of ATP synthase subunit delta from Methylobacterium radiotolerans (strain ATCC 27329 / DSM 1819 / JCM 2831 / NBRC 15690 / NCIMB 10815 / 0-1).